Consider the following 325-residue polypeptide: MSIRVGIVGISGFGGGEAMRLVASHPSFELIYAAGEGSAGSRLVDRFPGVPAKLADLVIEKWDPVTLPKLDLLFASLPTGASAEALARVPEDVRIVDIGGDHRYVEGWAYGLADVWPAEIEGRIRVANPGCFPAATLSALAPLLAERLIEPDNIVIDAKTGISGAGRGGADSKFGYAETNETVVPYGLLKHVHMPEIAKTIERLSGGSAAGLVFTPHLVPMTRGVLATMYCRGRASTGECLDAARRFYAGRAFVRVTDKPPQTKWATGSNLAFVSYAADPERNLVIAMGVVDNLGKGAAGQAVQNANLICGLPETAGLDGLPVWP.

The active site involves C131.

It belongs to the NAGSA dehydrogenase family. Type 1 subfamily.

It is found in the cytoplasm. It catalyses the reaction N-acetyl-L-glutamate 5-semialdehyde + phosphate + NADP(+) = N-acetyl-L-glutamyl 5-phosphate + NADPH + H(+). It functions in the pathway amino-acid biosynthesis; L-arginine biosynthesis; N(2)-acetyl-L-ornithine from L-glutamate: step 3/4. In terms of biological role, catalyzes the NADPH-dependent reduction of N-acetyl-5-glutamyl phosphate to yield N-acetyl-L-glutamate 5-semialdehyde. The protein is N-acetyl-gamma-glutamyl-phosphate reductase of Methylobacterium sp. (strain 4-46).